Reading from the N-terminus, the 385-residue chain is GDP-D-glucose phosphorylase 1 (385 aa).

Residue His218 is the Tele-GMP-histidine intermediate of the active site.

This sequence belongs to the GDPGP1 family.

Its subcellular location is the cytoplasm. The enzyme catalyses GDP-alpha-D-glucose + phosphate = alpha-D-glucose 1-phosphate + GDP + H(+). Specific and highly efficient GDP-D-glucose phosphorylase regulating the levels of GDP-D-glucose in cells. This is GDP-D-glucose phosphorylase 1 (GDPGP1) from Macaca fascicularis (Crab-eating macaque).